Consider the following 350-residue polypeptide: Phosphotriesterase-related protein (350 aa).

A divalent metal cation is bound by residues His-22, His-24, Glu-169, His-201, His-230, and Asp-298.

Belongs to the metallo-dependent hydrolases superfamily. Phosphotriesterase family. A divalent metal cation is required as a cofactor.

The polypeptide is Phosphotriesterase-related protein (Drosophila ananassae (Fruit fly)).